The chain runs to 213 residues: Orotate phosphoribosyltransferase (213 aa).

Position 26 (Lys-26) interacts with 5-phospho-alpha-D-ribose 1-diphosphate. An orotate-binding site is contributed by 34–35 (FF). 5-phospho-alpha-D-ribose 1-diphosphate contacts are provided by residues 72–73 (YK), Arg-98, Lys-99, Lys-102, and 123–131 (DDVISAGTS). Orotate-binding residues include Ser-127 and Arg-155.

The protein belongs to the purine/pyrimidine phosphoribosyltransferase family. PyrE subfamily. As to quaternary structure, homodimer. Mg(2+) is required as a cofactor.

The catalysed reaction is orotidine 5'-phosphate + diphosphate = orotate + 5-phospho-alpha-D-ribose 1-diphosphate. The protein operates within pyrimidine metabolism; UMP biosynthesis via de novo pathway; UMP from orotate: step 1/2. Its function is as follows. Catalyzes the transfer of a ribosyl phosphate group from 5-phosphoribose 1-diphosphate to orotate, leading to the formation of orotidine monophosphate (OMP). The sequence is that of Orotate phosphoribosyltransferase from Neisseria gonorrhoeae (strain NCCP11945).